The following is a 214-amino-acid chain: uncharacterized protein (214 aa).

This is an uncharacterized protein from Rhodobacter capsulatus (Rhodopseudomonas capsulata).